Reading from the N-terminus, the 381-residue chain is MKYELQTTDGRARRGRLIFERGVVETPAFMPVGTYGTVKGMTPEEVKDTGAQILLGNTFHLWLRPGQEIMKLHGDLHDFMQWHGPILTDSGGFQVFSLGDIRKITEQGVHFRNPINGDSIFLSPEKSMEIQHDLGSDIVMIFDECTPYPADWDYAKRSMEMSLRWAKRSRQRFDELENKNALFGIIQGSVYEDLRDVSVKGLVDIGFDGYAVGGLAVGEPKEDMHRILEHVCPQIPEDKPRYLMGVGKPEDLVEGVRRGVDMFDCVMPTRNARNGHLFVTDGVVKIRNAKYKDDVSPLDEHCDCYTCRNYSRAYLHHLDRCNEILGARLNTIHNLRYYQRLMAGLRQAIEEGKLEHFVVDFYQRIGKPIPPLAEKDVAAGN.

D89 (proton acceptor) is an active-site residue. Substrate-binding positions include 89–93 (DSGGF), D143, Q187, and G214. The segment at 245 to 251 (GVGKPED) is RNA binding. Catalysis depends on D264, which acts as the Nucleophile. The segment at 269-273 (TRNAR) is RNA binding; important for wobble base 34 recognition. Zn(2+) contacts are provided by C302, C304, C307, and H333.

The protein belongs to the queuine tRNA-ribosyltransferase family. As to quaternary structure, homodimer. Within each dimer, one monomer is responsible for RNA recognition and catalysis, while the other monomer binds to the replacement base PreQ1. It depends on Zn(2+) as a cofactor.

It carries out the reaction 7-aminomethyl-7-carbaguanine + guanosine(34) in tRNA = 7-aminomethyl-7-carbaguanosine(34) in tRNA + guanine. It functions in the pathway tRNA modification; tRNA-queuosine biosynthesis. Catalyzes the base-exchange of a guanine (G) residue with the queuine precursor 7-aminomethyl-7-deazaguanine (PreQ1) at position 34 (anticodon wobble position) in tRNAs with GU(N) anticodons (tRNA-Asp, -Asn, -His and -Tyr). Catalysis occurs through a double-displacement mechanism. The nucleophile active site attacks the C1' of nucleotide 34 to detach the guanine base from the RNA, forming a covalent enzyme-RNA intermediate. The proton acceptor active site deprotonates the incoming PreQ1, allowing a nucleophilic attack on the C1' of the ribose to form the product. After dissociation, two additional enzymatic reactions on the tRNA convert PreQ1 to queuine (Q), resulting in the hypermodified nucleoside queuosine (7-(((4,5-cis-dihydroxy-2-cyclopenten-1-yl)amino)methyl)-7-deazaguanosine). The polypeptide is Queuine tRNA-ribosyltransferase (Pectobacterium carotovorum subsp. carotovorum (strain PC1)).